The chain runs to 103 residues: Histone H4 variant TH091 (103 aa).

The segment at 1–20 is disordered; that stretch reads MSGRDKGGKGLGKGGAKRHR. The residue at position 2 (Ser2) is an N-acetylserine. 5 positions are modified to N6-acetyllysine: Lys6, Lys9, Lys13, Lys17, and Lys21. A DNA-binding region spans residues 17 to 21; sequence KRHRK.

It belongs to the histone H4 family. As to quaternary structure, the nucleosome is a histone octamer containing two molecules each of H2A, H2B, H3 and H4 assembled in one H3-H4 heterotetramer and two H2A-H2B heterodimers. The octamer wraps approximately 147 bp of DNA.

The protein localises to the nucleus. It is found in the chromosome. Core component of nucleosome. Nucleosomes wrap and compact DNA into chromatin, limiting DNA accessibility to the cellular machineries which require DNA as a template. Histones thereby play a central role in transcription regulation, DNA repair, DNA replication and chromosomal stability. DNA accessibility is regulated via a complex set of post-translational modifications of histones, also called histone code, and nucleosome remodeling. The protein is Histone H4 variant TH091 of Triticum aestivum (Wheat).